Reading from the N-terminus, the 492-residue chain is Cysteine--tRNA ligase (492 aa).

Position 29 (Cys29) interacts with Zn(2+). Positions 31-41 match the 'HIGH' region motif; it reads LTTSDPPHLGH. 3 residues coordinate Zn(2+): Cys229, His254, and Glu258. The 'KMSKS' region motif lies at 286–290; sequence KMSSS.

It belongs to the class-I aminoacyl-tRNA synthetase family. Requires Zn(2+) as cofactor.

It localises to the cytoplasm. It catalyses the reaction tRNA(Cys) + L-cysteine + ATP = L-cysteinyl-tRNA(Cys) + AMP + diphosphate. This chain is Cysteine--tRNA ligase, found in Haloarcula marismortui (strain ATCC 43049 / DSM 3752 / JCM 8966 / VKM B-1809) (Halobacterium marismortui).